A 382-amino-acid polypeptide reads, in one-letter code: Flap endonuclease 1 (382 aa).

An N-domain region spans residues 1 to 105 (MGIKGLNAII…HELTKRSSRR (105 aa)). A Mg(2+)-binding site is contributed by D34. DNA-binding residues include R47 and R71. Positions 87, 156, 158, 177, and 179 each coordinate Mg(2+). The segment at 120–251 (EKMKQERRLV…VTALKLIKTH (132 aa)) is I-domain. E156 is a DNA binding site. Residues G229 and D231 each contribute to the DNA site. Residue D231 coordinates Mg(2+). The segment at 339 to 347 (IQGRLDGFF) is interaction with PCNA. The segment at 358–382 (AAAAKRAQENKKLNKNKNKVTKGRR) is disordered. Basic residues predominate over residues 370–382 (LNKNKNKVTKGRR).

It belongs to the XPG/RAD2 endonuclease family. FEN1 subfamily. In terms of assembly, interacts with PCNA. Three molecules of RAD27 bind to one PCNA trimer with each molecule binding to one PCNA monomer. PCNA stimulates the nuclease activity without altering cleavage specificity. Mg(2+) is required as a cofactor. In terms of processing, phosphorylated. Phosphorylation upon DNA damage induces relocalization to the nuclear plasma.

The protein resides in the nucleus. It is found in the nucleolus. The protein localises to the nucleoplasm. Its subcellular location is the mitochondrion. Functionally, structure-specific nuclease with 5'-flap endonuclease and 5'-3' exonuclease activities involved in DNA replication and repair. During DNA replication, cleaves the 5'-overhanging flap structure that is generated by displacement synthesis when DNA polymerase encounters the 5'-end of a downstream Okazaki fragment. It enters the flap from the 5'-end and then tracks to cleave the flap base, leaving a nick for ligation. Also involved in the long patch base excision repair (LP-BER) pathway, by cleaving within the apurinic/apyrimidinic (AP) site-terminated flap. Acts as a genome stabilization factor that prevents flaps from equilibrating into structures that lead to duplications and deletions. Also possesses 5'-3' exonuclease activity on nicked or gapped double-stranded DNA, and exhibits RNase H activity. Also involved in replication and repair of rDNA and in repairing mitochondrial DNA. The polypeptide is Flap endonuclease 1 (Saccharomyces cerevisiae (strain RM11-1a) (Baker's yeast)).